The primary structure comprises 249 residues: Cysteine-rich secretory protein 1 (249 aa).

Positions 1–20 are cleaved as a signal peptide; that stretch reads MEIKHLLFLVAAACLLPVLS. One can recognise an SCP domain in the interval 45-175; that stretch reads VNIHNTLRRG…SPRYFYVCHY (131 aa). An N-linked (GlcNAc...) asparagine glycan is attached at Asn-104. 5 disulfides stabilise this stretch: Cys-195-Cys-202, Cys-198-Cys-207, Cys-211-Cys-244, Cys-220-Cys-238, and Cys-229-Cys-242. Residues 211 to 244 form the ShKT domain; sequence CIYYDEYTDCSLEVRFLGCNHSTPRMFCKATCLC. An N-linked (GlcNAc...) asparagine glycan is attached at Asn-230.

It belongs to the CRISP family. Expressed in all the regions of the epididymis except the caput and is not detected in the testis, prostate, seminal vesicle, and brain.

Functionally, may have a role in sperm-egg fusion and maturation. The sequence is that of Cysteine-rich secretory protein 1 (CRISP1) from Macaca mulatta (Rhesus macaque).